A 207-amino-acid chain; its full sequence is Ribosomal RNA large subunit methyltransferase E (207 aa).

S-adenosyl-L-methionine is bound by residues Gly61, Trp63, Asp81, Asp97, and Asp122. Catalysis depends on Lys162, which acts as the Proton acceptor.

This sequence belongs to the class I-like SAM-binding methyltransferase superfamily. RNA methyltransferase RlmE family.

It localises to the cytoplasm. It carries out the reaction uridine(2552) in 23S rRNA + S-adenosyl-L-methionine = 2'-O-methyluridine(2552) in 23S rRNA + S-adenosyl-L-homocysteine + H(+). Specifically methylates the uridine in position 2552 of 23S rRNA at the 2'-O position of the ribose in the fully assembled 50S ribosomal subunit. This Pseudomonas putida (strain ATCC 700007 / DSM 6899 / JCM 31910 / BCRC 17059 / LMG 24140 / F1) protein is Ribosomal RNA large subunit methyltransferase E.